We begin with the raw amino-acid sequence, 305 residues long: MPLNLPDKLPAIELLKEENIFVIDTSRATQQDIRPLRIVILNLMPLKITTETDLVRLLSNTPLQVEISFMKIKSHTSKNTPIEHMQTFYTDFEQMRNEKYDGMIITGAPVEQMDFEEVTYWEEITEIFDWARTHVTSTLYICWAAQAGLYHHYGVPKYPLDQKMFGIFEHRVLEPFHSIFRGFDDCFYVPHSRHTEVRREDILKVPELTLLSESKDAGVYMAMARGGREFFVTGHSEYSPYTLDTEYRRDLGKGLPIEIPRNYYVDDDPDKGPLVRWRAHANLLFSNWLNYFVYQETPYNINDIE.

The active-site Acyl-thioester intermediate is the Cys142. Substrate is bound by residues Lys163 and Ser192. Catalysis depends on His235, which acts as the Proton acceptor. Glu237 is a catalytic residue. A substrate-binding site is contributed by Arg249.

It belongs to the MetA family.

It localises to the cytoplasm. The catalysed reaction is L-homoserine + acetyl-CoA = O-acetyl-L-homoserine + CoA. It functions in the pathway amino-acid biosynthesis; L-methionine biosynthesis via de novo pathway; O-acetyl-L-homoserine from L-homoserine: step 1/1. Functionally, transfers an acetyl group from acetyl-CoA to L-homoserine, forming acetyl-L-homoserine. The polypeptide is Homoserine O-acetyltransferase (Bacteroides thetaiotaomicron (strain ATCC 29148 / DSM 2079 / JCM 5827 / CCUG 10774 / NCTC 10582 / VPI-5482 / E50)).